We begin with the raw amino-acid sequence, 967 residues long: Phosphoenolpyruvate carboxylase 1 (967 aa).

Serine 11 carries the phosphoserine modification. Active-site residues include histidine 173 and lysine 602. Serine 704 is modified (phosphoserine).

Belongs to the PEPCase type 1 family. Homotetramer. The cofactor is Mg(2+). Mn(2+) is required as a cofactor. The phosphorylation of Ser-11 is reversibly promoted by inorganic phosphate (Pi) deprivation. Enhanced activity by phosphorylation at pH 7.3 by lowering Km and sensitivity to inhibition by L-malate and L-aspartate, while enhancing activation by glucose 6-phosphate. Expressed in all plant organs, with higher levels in roots.

The protein localises to the cytoplasm. It catalyses the reaction oxaloacetate + phosphate = phosphoenolpyruvate + hydrogencarbonate. Its activity is regulated as follows. By light-reversible phosphorylation. Activated by inorganic phosphate (Pi) deprivation and glucose 6-phosphate. Inhibited by L-malate and L-aspartate. Through the carboxylation of phosphoenolpyruvate (PEP) it forms oxaloacetate, a four-carbon dicarboxylic acid source for the tricarboxylic acid cycle. Contributes probably to the adaptation to inorganic phosphate (Pi) deprivation. The sequence is that of Phosphoenolpyruvate carboxylase 1 (PPC1) from Arabidopsis thaliana (Mouse-ear cress).